The chain runs to 631 residues: Arginine--tRNA ligase (631 aa).

The 'HIGH' region signature appears at 132-142 (PNIAKPLHVGH).

Belongs to the class-I aminoacyl-tRNA synthetase family.

The protein resides in the cytoplasm. It carries out the reaction tRNA(Arg) + L-arginine + ATP = L-arginyl-tRNA(Arg) + AMP + diphosphate. The chain is Arginine--tRNA ligase from Halobacterium salinarum (strain ATCC 700922 / JCM 11081 / NRC-1) (Halobacterium halobium).